Consider the following 466-residue polypeptide: Sucrose-6-phosphate hydrolase (466 aa).

Residues 38 to 41 (LMND), Gln-57, 100 to 101 (YS), 159 to 160 (RD), and Glu-218 contribute to the substrate site. Asp-41 is an active-site residue.

It belongs to the glycosyl hydrolase 32 family.

The protein resides in the cytoplasm. The enzyme catalyses Hydrolysis of terminal non-reducing beta-D-fructofuranoside residues in beta-D-fructofuranosides.. The protein operates within glycan biosynthesis; sucrose metabolism. Enables the bacterium to metabolize sucrose as a sole carbon source. This chain is Sucrose-6-phosphate hydrolase (scrB), found in Salmonella typhimurium.